Here is a 206-residue protein sequence, read N- to C-terminus: FMN-dependent NADH:quinone oxidoreductase (206 aa).

Residues 15–17 (SVS), 94–97 (MYNF), and 138–141 (TRGG) each bind FMN.

Belongs to the azoreductase type 1 family. As to quaternary structure, homodimer. FMN serves as cofactor.

It catalyses the reaction 2 a quinone + NADH + H(+) = 2 a 1,4-benzosemiquinone + NAD(+). It carries out the reaction N,N-dimethyl-1,4-phenylenediamine + anthranilate + 2 NAD(+) = 2-(4-dimethylaminophenyl)diazenylbenzoate + 2 NADH + 2 H(+). Quinone reductase that provides resistance to thiol-specific stress caused by electrophilic quinones. Its function is as follows. Also exhibits azoreductase activity. Catalyzes the reductive cleavage of the azo bond in aromatic azo compounds to the corresponding amines. The chain is FMN-dependent NADH:quinone oxidoreductase from Rhizobium meliloti (strain 1021) (Ensifer meliloti).